The primary structure comprises 198 residues: MSLSIDVTSLPSISSSIYKNESSSTTSTLSGKSIGRSEQYISPDAEAFSKYMLSKSPEDIGPSDSASNDPLTSFSNRSNAVKTNADAGVSMDSSTQSRPSSNVGCDQVDFSFNKGIKVSANLDSSVSISTNVKKEKSKNDHRSRKHYPKIEAESDSDDYVLDDSDSDDGKCKNCKYKRKYFALRMRMKRVAMQLIEDL.

Residues 16–30 (SIYKNESSSTTSTLS) show a composition bias toward low complexity. Disordered stretches follow at residues 16 to 37 (SIYK…IGRS), 53 to 104 (LSKS…SNVG), and 127 to 167 (SIST…SDSD). Composition is skewed to polar residues over residues 64–82 (DSAS…NAVK) and 91–104 (MDSS…SNVG). The residue at position 67 (S67) is a Phosphoserine; by host CK1. Position 92 (D92) interacts with Mg(2+). Residues 153 to 166 (ESDSDDYVLDDSDS) show a composition bias toward acidic residues. A phosphoserine; by host mark is found at S154, S156, S164, and S166.

The protein belongs to the rotavirus NSP5 family. Homodimer. Interacts with VP1. Interacts with VP2. Interacts with NSP2; this interaction leads to up-regulation of NSP5 hyperphosphorylation and formation of virus factories. Interacts with NSP6. Participates in the selective exclusion of host proteins from stress granules (SG) and P bodies (PB). Also participates in the sequestration of these remodeled organelles in viral factories. Mg(2+) is required as a cofactor. O-glycosylated. In terms of processing, hyperphosphorylated on serine residues, when in dimeric form. Phosphorylation by host CK1 is required for the hyperphosphorylation of NSP5 dimer.

The protein resides in the host cytoplasm. Its function is as follows. Plays an essential role in the viral genome replication. Participates, together with NSP2, in the formation of viral factories (viroplasms), which are large inclusions in the host cytoplasm where replication intermediates are assembled and viral RNA replication takes place. Orchestrates the recruitment of viroplasmic proteins such as capsid proteins to these factories. Participates in the selective exclusion of host proteins from stress granules (SG) and P bodies (PB). Also participates in the sequestration of these remodeled organelles in viral factories. The polypeptide is Non-structural protein 5 (Rotavirus A (strain RVA/Human/Japan/K8/1977/G1P3A[9]) (RV-A)).